Consider the following 518-residue polypeptide: Membrane-bound lytic murein transglycosylase F (518 aa).

Residues 1-21 (MKKLKINYLFIGILALLLAVA) form the signal peptide. Residues 22–269 (LWPSIPWFGK…RIEEKYLGHG (248 aa)) are non-LT domain. An LT domain region spans residues 270–518 (DDFDYVDTRT…SRKGSEEKQN (249 aa)). Glu314 is an active-site residue.

In the N-terminal section; belongs to the bacterial solute-binding protein 3 family. This sequence in the C-terminal section; belongs to the transglycosylase Slt family.

Its subcellular location is the cell outer membrane. The catalysed reaction is Exolytic cleavage of the (1-&gt;4)-beta-glycosidic linkage between N-acetylmuramic acid (MurNAc) and N-acetylglucosamine (GlcNAc) residues in peptidoglycan, from either the reducing or the non-reducing ends of the peptidoglycan chains, with concomitant formation of a 1,6-anhydrobond in the MurNAc residue.. Its function is as follows. Murein-degrading enzyme that degrades murein glycan strands and insoluble, high-molecular weight murein sacculi, with the concomitant formation of a 1,6-anhydromuramoyl product. Lytic transglycosylases (LTs) play an integral role in the metabolism of the peptidoglycan (PG) sacculus. Their lytic action creates space within the PG sacculus to allow for its expansion as well as for the insertion of various structures such as secretion systems and flagella. The chain is Membrane-bound lytic murein transglycosylase F from Shigella sonnei (strain Ss046).